A 64-amino-acid polypeptide reads, in one-letter code: Large ribosomal subunit protein bL33 (64 aa).

Belongs to the bacterial ribosomal protein bL33 family.

The chain is Large ribosomal subunit protein bL33 from Synechococcus sp. (strain JA-3-3Ab) (Cyanobacteria bacterium Yellowstone A-Prime).